The following is a 367-amino-acid chain: dTDP-4-amino-4,6-dideoxy-D-glucose transaminase (367 aa).

K184 is modified (N6-(pyridoxal phosphate)lysine).

This sequence belongs to the DegT/DnrJ/EryC1 family. It depends on pyridoxal 5'-phosphate as a cofactor.

It carries out the reaction dTDP-4-amino-4,6-dideoxy-D-glucose + 2-oxoglutarate = dTDP-4-dehydro-6-deoxy-alpha-D-glucose + L-glutamate. The protein operates within bacterial outer membrane biogenesis; lipopolysaccharide biosynthesis. Its function is as follows. Catalyzes the conversion of dTDP-4-dehydro-6-deoxy-D-glucose (dTDP-D-Glc4O) to dTDP-4-amino-4,6-dideoxy-D-glucose (dTDP-D-Qui4N). L-glutamine can also be used as amino donor. This chain is dTDP-4-amino-4,6-dideoxy-D-glucose transaminase (vioA), found in Shigella dysenteriae.